We begin with the raw amino-acid sequence, 151 residues long: SsrA-binding protein (151 aa).

The protein belongs to the SmpB family.

It is found in the cytoplasm. Required for rescue of stalled ribosomes mediated by trans-translation. Binds to transfer-messenger RNA (tmRNA), required for stable association of tmRNA with ribosomes. tmRNA and SmpB together mimic tRNA shape, replacing the anticodon stem-loop with SmpB. tmRNA is encoded by the ssrA gene; the 2 termini fold to resemble tRNA(Ala) and it encodes a 'tag peptide', a short internal open reading frame. During trans-translation Ala-aminoacylated tmRNA acts like a tRNA, entering the A-site of stalled ribosomes, displacing the stalled mRNA. The ribosome then switches to translate the ORF on the tmRNA; the nascent peptide is terminated with the 'tag peptide' encoded by the tmRNA and targeted for degradation. The ribosome is freed to recommence translation, which seems to be the essential function of trans-translation. The chain is SsrA-binding protein from Nitrosomonas europaea (strain ATCC 19718 / CIP 103999 / KCTC 2705 / NBRC 14298).